Consider the following 1162-residue polypeptide: Integrin alpha-L (1162 aa).

A signal peptide spans 1 to 23; that stretch reads MSFRIAGPRLLLLGLQLFAKAWS. Topologically, residues 24–1088 are extracellular; the sequence is YNLDTRPTQS…DLIHEKEMLH (1065 aa). 2 FG-GAP repeats span residues 28 to 79 and 80 to 138; these read TRPT…FCQP and VSLH…GPML. Cys70 and Cys77 are oxidised to a cystine. The N-linked (GlcNAc...) asparagine glycan is linked to Asn86. Intrachain disulfides connect Cys108–Cys126 and Cys147–Cys199. Residues 153 to 325 enclose the VWFA domain; it reads DLVFLFDGSQ…EKLKDLFTDL (173 aa). N-linked (GlcNAc...) asparagine glycans are attached at residues Asn185 and Asn270. FG-GAP repeat units lie at residues 336–387, 390–443, 444–504, 505–561, and 565–625; these read NRQD…GATF, QEPL…GGRW, NQTQ…LFEM, VSEL…GLSP, and QRIQ…FSPE. Asn444 carries N-linked (GlcNAc...) asparagine glycosylation. Ca(2+) is bound by residues Asp466, Asp468, Asp470, Glu474, Asp528, Asn530, Asp532, Asp536, Asp588, Asp592, and Asp596. The cysteines at positions 651 and 705 are disulfide-linked. N-linked (GlcNAc...) asparagine glycosylation is found at Asn668, Asn696, Asn724, and Asn728. Cys768 and Cys774 are disulfide-bonded. An N-linked (GlcNAc...) asparagine glycan is attached at Asn777. The cysteines at positions 841 and 857 are disulfide-linked. Asn858, Asn881, Asn891, Asn900, and Asn928 each carry an N-linked (GlcNAc...) asparagine glycan. Intrachain disulfides connect Cys994/Cys1010 and Cys1018/Cys1049. Asn1057 carries N-linked (GlcNAc...) asparagine glycosylation. A helical membrane pass occupies residues 1089–1109; that stretch reads VYVLSGIGGLVLLFLIFLALY. The Cytoplasmic segment spans residues 1110 to 1162; that stretch reads KVGFFKRNLKEKMEADGGVPNGSPPEDTDPLAVPGEETKDMGCLEPLRESDKD. The GFFKR motif motif lies at 1112–1116; sequence GFFKR. Positions 1124–1162 are disordered; it reads ADGGVPNGSPPEDTDPLAVPGEETKDMGCLEPLRESDKD. Residues 1145–1162 show a composition bias toward basic and acidic residues; sequence EETKDMGCLEPLRESDKD.

It belongs to the integrin alpha chain family. As to quaternary structure, heterodimer of an alpha and a beta subunit. The ITGAL alpha subunit associates with the ITGB2 beta subunit. Interacts with THBD. Interacts with CD226. In resting T-cells, up to 40% of surface ITGAL is constitutively phosphorylated. Phosphorylation causes conformational changes needed for ligand binding and is necessary for the activation by some physiological agents. In terms of tissue distribution, leukocytes.

It is found in the cell membrane. Its function is as follows. Integrin ITGAL/ITGB2 is a receptor for ICAM1, ICAM2, ICAM3 and ICAM4. Integrin ITGAL/ITGB2 is a receptor for F11R. Integrin ITGAL/ITGB2 is a receptor for the secreted form of ubiquitin-like protein ISG15; the interaction is mediated by ITGAL. Involved in a variety of immune phenomena including leukocyte-endothelial cell interaction, cytotoxic T-cell mediated killing, and antibody dependent killing by granulocytes and monocytes. Contributes to natural killer cell cytotoxicity. Involved in leukocyte adhesion and transmigration of leukocytes including T-cells and neutrophils. Acts as a platform at the immunological synapse to translate TCR engagement and density of the ITGAL ligand ICAM1 into graded adhesion. Required for generation of common lymphoid progenitor cells in bone marrow, indicating the role in lymphopoiesis. Integrin ITGAL/ITGB2 in association with ICAM3, contributes to apoptotic neutrophil phagocytosis by macrophages. This is Integrin alpha-L from Mus musculus (Mouse).